A 364-amino-acid polypeptide reads, in one-letter code: Anhydro-N-acetylmuramic acid kinase (364 aa).

Residue 11 to 18 participates in ATP binding; sequence GSSLDGID.

The protein belongs to the anhydro-N-acetylmuramic acid kinase family.

The catalysed reaction is 1,6-anhydro-N-acetyl-beta-muramate + ATP + H2O = N-acetyl-D-muramate 6-phosphate + ADP + H(+). It participates in amino-sugar metabolism; 1,6-anhydro-N-acetylmuramate degradation. The protein operates within cell wall biogenesis; peptidoglycan recycling. Its function is as follows. Catalyzes the specific phosphorylation of 1,6-anhydro-N-acetylmuramic acid (anhMurNAc) with the simultaneous cleavage of the 1,6-anhydro ring, generating MurNAc-6-P. Is required for the utilization of anhMurNAc either imported from the medium or derived from its own cell wall murein, and thus plays a role in cell wall recycling. In Pseudomonas savastanoi pv. phaseolicola (strain 1448A / Race 6) (Pseudomonas syringae pv. phaseolicola (strain 1448A / Race 6)), this protein is Anhydro-N-acetylmuramic acid kinase.